We begin with the raw amino-acid sequence, 468 residues long: UDP-N-acetylmuramate--L-alanine ligase (468 aa).

114-120 (GTHGKTT) contributes to the ATP binding site.

Belongs to the MurCDEF family.

It is found in the cytoplasm. It catalyses the reaction UDP-N-acetyl-alpha-D-muramate + L-alanine + ATP = UDP-N-acetyl-alpha-D-muramoyl-L-alanine + ADP + phosphate + H(+). It participates in cell wall biogenesis; peptidoglycan biosynthesis. Cell wall formation. This chain is UDP-N-acetylmuramate--L-alanine ligase, found in Methylorubrum populi (strain ATCC BAA-705 / NCIMB 13946 / BJ001) (Methylobacterium populi).